The chain runs to 1418 residues: ABC transporter G family member 38 (1418 aa).

Residues 1–27 (MAHYRVSSEVENIMNRDRSHRKNEEED) are disordered. In terms of domain architecture, ABC transporter 1 spans 147–419 (TKIRVLPDRK…FEFMGFKCPE (273 aa)). 179–186 (GPPGSGKS) provides a ligand contact to ATP. The 214-residue stretch at 497 to 710 (ELLKACLERE…IQTAVSVNEF (214 aa)) folds into the ABC transmembrane type-2 1 domain. 6 helical membrane-spanning segments follow: residues 516 to 536 (TFVL…VVFW), 548 to 568 (GIIY…SGFF), 600 to 620 (IITF…TYFT), 634 to 654 (YLVL…IAAV), 659 to 679 (VVSN…SGYV), and 729 to 749 (FFVE…STIL). The 253-residue stretch at 821 to 1073 (MTFENITYSV…QLIEYFEGIR (253 aa)) folds into the ABC transporter 2 domain. 866 to 873 (GVSGAGKT) is a binding site for ATP. Positions 1146-1360 (SQFQACLWKQ…GLYGLTIAQY (215 aa)) constitute an ABC transmembrane type-2 2 domain. 7 helical membrane-spanning segments follow: residues 1167–1187 (AVRF…FWSL), 1197–1217 (IFNS…QSAA), 1249–1269 (VIIE…IVYG), 1284–1304 (IFFT…VISV), 1310–1330 (IASI…GFTI), 1341–1361 (WFTY…AQYG), and 1387–1407 (FLWV…FIYA).

The protein belongs to the ABC transporter superfamily. ABCG family. PDR (TC 3.A.1.205) subfamily. As to expression, expressed in roots and siliques at low levels.

The protein resides in the membrane. In terms of biological role, may be a general defense protein. The protein is ABC transporter G family member 38 (ABCG38) of Arabidopsis thaliana (Mouse-ear cress).